Here is a 382-residue protein sequence, read N- to C-terminus: Type II secretion system protein L (382 aa).

Residues 1 to 233 (MSGVSALFLP…QQSSQWRRWR (233 aa)) lie on the Cytoplasmic side of the membrane. The helical transmembrane segment at 234–254 (PLLGLVGLWLVLQWGFTLVQA) threads the bilayer. Residues 255-382 (WQLQREGDRY…TVSARLVIGG (128 aa)) lie on the Periplasmic side of the membrane.

This sequence belongs to the GSP L family. As to quaternary structure, type II secretion system is composed of four main components: the outer membrane complex, the inner membrane complex, the cytoplasmic secretion ATPase and the periplasm-spanning pseudopilus. Forms homodimers. Interacts with XcpZ/GspM. Interacts with XcpR/GspE and XcpS/GspF.

The protein resides in the cell inner membrane. Functionally, inner membrane component of the type II secretion system required for the energy-dependent secretion of extracellular factors such as proteases and toxins from the periplasm. Plays a role in the complex assembly and recruits XcpZ resulting in a stable complex in the inner membrane. Provides thus a link between the energy-providing XcpR protein in the cytoplasm and the rest of the T2SS machinery. The polypeptide is Type II secretion system protein L (xcpY) (Pseudomonas aeruginosa (strain ATCC 15692 / DSM 22644 / CIP 104116 / JCM 14847 / LMG 12228 / 1C / PRS 101 / PAO1)).